Reading from the N-terminus, the 112-residue chain is Large ribosomal subunit protein eL31 (112 aa).

The protein belongs to the eukaryotic ribosomal protein eL31 family. In terms of assembly, component of the large ribosomal subunit. Mature ribosomes consist of a small (40S) and a large (60S) subunit. The 40S subunit contains about 32 different proteins and 1 molecule of RNA (18S). The 60S subunit contains 45 different proteins and 3 molecules of RNA (25S, 5.8S and 5S).

It is found in the cytoplasm. Component of the ribosome, a large ribonucleoprotein complex responsible for the synthesis of proteins in the cell. The small ribosomal subunit (SSU) binds messenger RNAs (mRNAs) and translates the encoded message by selecting cognate aminoacyl-transfer RNA (tRNA) molecules. The large subunit (LSU) contains the ribosomal catalytic site termed the peptidyl transferase center (PTC), which catalyzes the formation of peptide bonds, thereby polymerizing the amino acids delivered by tRNAs into a polypeptide chain. The nascent polypeptides leave the ribosome through a tunnel in the LSU and interact with protein factors that function in enzymatic processing, targeting, and the membrane insertion of nascent chains at the exit of the ribosomal tunnel. The polypeptide is Large ribosomal subunit protein eL31 (Candida albicans (strain SC5314 / ATCC MYA-2876) (Yeast)).